We begin with the raw amino-acid sequence, 68 residues long: Amphipathic peptide OcyC1 (68 aa).

The signal sequence occupies residues 1–23; that stretch reads MKAQLCILLIALVLFQTFSQSDA. Residue Phe-36 is modified to Phenylalanine amide. A propeptide spanning residues 38–68 is cleaved from the precursor; the sequence is RRGLNDLDDLDELFDGEISQADVDFLNELMR.

This sequence belongs to the non-disulfide-bridged peptide (NDBP) superfamily. Short antimicrobial peptide (group 4) family. Expressed by the venom gland.

The protein localises to the secreted. Its subcellular location is the target cell membrane. Functionally, antimicrobial peptide. Inhibits the growth of Gram-positive and Gram-negative bacteria. Shows antifungal activity with MIC values ranging from 12.5 to 25 uM. Also shows an inhibitory activity on C.albicans biofilms at high concentrations. Shows low cytotoxic activity and has weak hemolytic activity. The polypeptide is Amphipathic peptide OcyC1 (Opisthacanthus cayaporum (South American scorpion)).